The primary structure comprises 229 residues: MAKKGKKYLEAAKAVDPTKQYTPEEAVDLLKKIDFAKFDETVEVAYRLNVDPKQADQQIRGAVVLPNGTGKTAKVIVFAQGDQAKAAEDAGADIVGAEDLVQKIQDGWLDFDVAVATPPMMAQVGRLGRVLGPKGLMPNPKTGTVTMDTAKAVKDIKAGQVAYRVDKAGIIHAPIGKKSFDADKLLENFKAMNDIVLKARPASTKGIYIKSLALTATMAPGIKVNPSDF.

This sequence belongs to the universal ribosomal protein uL1 family. As to quaternary structure, part of the 50S ribosomal subunit.

Binds directly to 23S rRNA. The L1 stalk is quite mobile in the ribosome, and is involved in E site tRNA release. In terms of biological role, protein L1 is also a translational repressor protein, it controls the translation of the L11 operon by binding to its mRNA. This Lacticaseibacillus casei (strain BL23) (Lactobacillus casei) protein is Large ribosomal subunit protein uL1.